A 576-amino-acid chain; its full sequence is Aspartate--tRNA ligase (576 aa).

Position 170 (E170) interacts with L-aspartate. Residues 194-197 (QLFK) form an aspartate region. R216 contributes to the L-aspartate binding site. Residues 216-218 (RDE) and Q225 contribute to the ATP site. H438 contacts L-aspartate. Position 471 (E471) interacts with ATP. L-aspartate is bound at residue R478. 523-526 (GLDR) lines the ATP pocket.

Belongs to the class-II aminoacyl-tRNA synthetase family. Type 1 subfamily. In terms of assembly, homodimer.

It localises to the cytoplasm. The catalysed reaction is tRNA(Asp) + L-aspartate + ATP = L-aspartyl-tRNA(Asp) + AMP + diphosphate. Catalyzes the attachment of L-aspartate to tRNA(Asp) in a two-step reaction: L-aspartate is first activated by ATP to form Asp-AMP and then transferred to the acceptor end of tRNA(Asp). This chain is Aspartate--tRNA ligase, found in Fervidobacterium nodosum (strain ATCC 35602 / DSM 5306 / Rt17-B1).